We begin with the raw amino-acid sequence, 152 residues long: Ribosome maturation factor RimP (152 aa).

The protein belongs to the RimP family.

It is found in the cytoplasm. Required for maturation of 30S ribosomal subunits. The polypeptide is Ribosome maturation factor RimP (Pseudoalteromonas atlantica (strain T6c / ATCC BAA-1087)).